The sequence spans 654 residues: Threonine--tRNA ligase (654 aa).

In terms of domain architecture, TGS spans Met-1 to Thr-63. Residues Asp-247–Pro-544 are catalytic. Positions 344, 395, and 521 each coordinate Zn(2+).

The protein belongs to the class-II aminoacyl-tRNA synthetase family. As to quaternary structure, homodimer. Zn(2+) serves as cofactor.

The protein localises to the cytoplasm. It carries out the reaction tRNA(Thr) + L-threonine + ATP = L-threonyl-tRNA(Thr) + AMP + diphosphate + H(+). In terms of biological role, catalyzes the attachment of threonine to tRNA(Thr) in a two-step reaction: L-threonine is first activated by ATP to form Thr-AMP and then transferred to the acceptor end of tRNA(Thr). Also edits incorrectly charged L-seryl-tRNA(Thr). This is Threonine--tRNA ligase from Dinoroseobacter shibae (strain DSM 16493 / NCIMB 14021 / DFL 12).